The chain runs to 316 residues: N-acetyl-gamma-glutamyl-phosphate reductase (316 aa).

The active site involves Cys136.

It belongs to the NAGSA dehydrogenase family. Type 1 subfamily.

It is found in the cytoplasm. It catalyses the reaction N-acetyl-L-glutamate 5-semialdehyde + phosphate + NADP(+) = N-acetyl-L-glutamyl 5-phosphate + NADPH + H(+). It functions in the pathway amino-acid biosynthesis; L-arginine biosynthesis; N(2)-acetyl-L-ornithine from L-glutamate: step 3/4. In terms of biological role, catalyzes the NADPH-dependent reduction of N-acetyl-5-glutamyl phosphate to yield N-acetyl-L-glutamate 5-semialdehyde. The sequence is that of N-acetyl-gamma-glutamyl-phosphate reductase from Xanthomonas campestris pv. campestris (strain B100).